A 313-amino-acid polypeptide reads, in one-letter code: Calcyphosin-2 (313 aa).

EF-hand domains follow at residues 144–179 (RILT…FHLE), 180–215 (VSEK…EMNE), and 216–251 (YRKS…KKHS). D193, N195, N197, K199, and E204 together coordinate Ca(2+).

The protein is Calcyphosin-2 (CAPS2) of Macaca fascicularis (Crab-eating macaque).